A 177-amino-acid polypeptide reads, in one-letter code: Large ribosomal subunit protein uL6 (177 aa).

This sequence belongs to the universal ribosomal protein uL6 family. Part of the 50S ribosomal subunit.

This protein binds to the 23S rRNA, and is important in its secondary structure. It is located near the subunit interface in the base of the L7/L12 stalk, and near the tRNA binding site of the peptidyltransferase center. The sequence is that of Large ribosomal subunit protein uL6 from Klebsiella pneumoniae (strain 342).